A 468-amino-acid chain; its full sequence is Tumor necrosis factor receptor superfamily member 10A (468 aa).

The N-terminal stretch at 1 to 23 is a signal peptide; the sequence is MAPPPARVHLGAFLAVTPNPGSA. The tract at residues 17–82 is disordered; the sequence is TPNPGSAASG…APGPRPAREA (66 aa). A compositionally biased stretch (low complexity) spans 20–34; the sequence is PGSAASGTEAAAATP. Over 24–239 the chain is Extracellular; that stretch reads ASGTEAAAAT…VHKESGNGHN (216 aa). Position 52 is an omega-N-methylarginine (Arg52). A compositionally biased stretch (low complexity) spans 63–74; sequence GPSARARAGRAP. TNFR-Cys repeat units lie at residues 107–145, 147–188, and 189–229; these read SAAT…PGAC, RCTE…NTAC, and QCKP…DIEC. 7 disulfides stabilise this stretch: Cys132–Cys145, Cys148–Cys164, Cys167–Cys180, Cys170–Cys188, Cys190–Cys204, Cys207–Cys221, and Cys211–Cys229. The N-linked (GlcNAc...) asparagine glycan is linked to Asn156. Residues 240 to 262 form a helical membrane-spanning segment; that stretch reads IWVILVVTLVVPLLLVAVLIVCC. Residues 263–468 are Cytoplasmic-facing; sequence CIGSGCGGDP…DGTGSAVSLE (206 aa). A Death domain is found at 365–448; the sequence is MLFFDKFANI…HAREKIQDLL (84 aa). Ser424, Ser463, and Ser466 each carry phosphoserine.

As to quaternary structure, monomer. Homooligomers and heterooligomers with TNFRSF10B. Three TNFRSF10A molecules interact with the TNFSF10 homotrimer. Can interact with TRADD and RIPK1. Interacts with ARAP1. In the absence of stimulation, interacts with BIRC2, DDX3X and GSK3B. The interaction with BIRC2 and DDX3X is further enhanced upon receptor stimulation and accompanied by DDX3X and BIRC2 cleavage. Interacts with ZDHHC3. Interacts with PTPN6; this interaction enables the inhibition of T-cell receptor signaling via LCK. In terms of assembly, (Microbial infection) Interacts with HCMV protein UL141; this interaction prevents TNFRSF10A cell surface expression. Palmitoylated. Palmitoylation of TNFRSF10A is required for its association with lipid rafts, oligomerization and function in TRAIL-induced cell death. Palmitoylated by ZDHHC3. Widely expressed. High levels are found in spleen, peripheral blood leukocytes, small intestine and thymus, but also in K-562 erythroleukemia cells, MCF-7 breast carcinoma cells and activated T-cells.

It localises to the cell membrane. The protein resides in the membrane raft. Its subcellular location is the cytoplasm. It is found in the cytosol. Receptor for the cytotoxic ligand TNFSF10/TRAIL. The adapter molecule FADD recruits caspase-8 to the activated receptor. The resulting death-inducing signaling complex (DISC) performs caspase-8 proteolytic activation which initiates the subsequent cascade of caspases (aspartate-specific cysteine proteases) mediating apoptosis. Promotes the activation of NF-kappa-B. In Homo sapiens (Human), this protein is Tumor necrosis factor receptor superfamily member 10A (TNFRSF10A).